The sequence spans 136 residues: Flagellar assembly factor FliW 2 (136 aa).

It belongs to the FliW family. Interacts with translational regulator CsrA and flagellin(s).

The protein localises to the cytoplasm. In terms of biological role, acts as an anti-CsrA protein, binds CsrA and prevents it from repressing translation of its target genes, one of which is flagellin. Binds to flagellin and participates in the assembly of the flagellum. This chain is Flagellar assembly factor FliW 2, found in Wolinella succinogenes (strain ATCC 29543 / DSM 1740 / CCUG 13145 / JCM 31913 / LMG 7466 / NCTC 11488 / FDC 602W) (Vibrio succinogenes).